Here is a 296-residue protein sequence, read N- to C-terminus: Diaminopimelate epimerase (296 aa).

Substrate contacts are provided by Asn17, Gln49, and Asn69. The active-site Proton donor is the Cys78. Residues 79–80 (GN), Asn171, Asn205, and 223–224 (ER) each bind substrate. Residue Cys232 is the Proton acceptor of the active site. 233-234 (GT) lines the substrate pocket.

This sequence belongs to the diaminopimelate epimerase family. As to quaternary structure, homodimer.

The protein resides in the cytoplasm. The catalysed reaction is (2S,6S)-2,6-diaminopimelate = meso-2,6-diaminopimelate. Its pathway is amino-acid biosynthesis; L-lysine biosynthesis via DAP pathway; DL-2,6-diaminopimelate from LL-2,6-diaminopimelate: step 1/1. Functionally, catalyzes the stereoinversion of LL-2,6-diaminopimelate (L,L-DAP) to meso-diaminopimelate (meso-DAP), a precursor of L-lysine and an essential component of the bacterial peptidoglycan. The chain is Diaminopimelate epimerase from Methylorubrum extorquens (strain CM4 / NCIMB 13688) (Methylobacterium extorquens).